The primary structure comprises 449 residues: Probable glycine dehydrogenase (decarboxylating) subunit 1 (449 aa).

It belongs to the GcvP family. N-terminal subunit subfamily. In terms of assembly, the glycine cleavage system is composed of four proteins: P, T, L and H. In this organism, the P 'protein' is a heterodimer of two subunits.

It carries out the reaction N(6)-[(R)-lipoyl]-L-lysyl-[glycine-cleavage complex H protein] + glycine + H(+) = N(6)-[(R)-S(8)-aminomethyldihydrolipoyl]-L-lysyl-[glycine-cleavage complex H protein] + CO2. Its function is as follows. The glycine cleavage system catalyzes the degradation of glycine. The P protein binds the alpha-amino group of glycine through its pyridoxal phosphate cofactor; CO(2) is released and the remaining methylamine moiety is then transferred to the lipoamide cofactor of the H protein. This is Probable glycine dehydrogenase (decarboxylating) subunit 1 from Solibacter usitatus (strain Ellin6076).